The chain runs to 622 residues: Low affinity potassium transport system protein Kup (622 aa).

12 helical membrane passes run 9–29 (LSAVTLAAIGVVYGDIGTSPL), 46–66 (PDVVFGFLSLIFWMLILVVSV), 101–121 (ILVVLGLIGGSFFYGEVVITP), 137–157 (PALDPYIVPCSIAVLTLLFVI), 165–185 (VGKLFAPVMLVWFLTLALLGL), 213–233 (VSFFALGAVVLAITGVEALYA), 247–267 (WFTVVLPSLVLNYFGQGALLL), 276–296 (PFFLLAPDWALIPLLILATLA), 337–357 (IYIPVINWTLYLAVVLVIIGF), 363–383 (LAAAYGIAVTGTMVITSILFC), 395–415 (FLVVFLLMVLLIIDIPMFSAN), and 416–436 (VLKLFSGGWLPLSLGLVMFII).

This sequence belongs to the HAK/KUP transporter (TC 2.A.72) family.

The protein resides in the cell inner membrane. It catalyses the reaction K(+)(in) + H(+)(in) = K(+)(out) + H(+)(out). In terms of biological role, responsible for the low-affinity transport of potassium into the cell. Likely operates as a K(+):H(+) symporter. This chain is Low affinity potassium transport system protein Kup, found in Yersinia pestis (strain Pestoides F).